The primary structure comprises 484 residues: Aspartyl aminopeptidase (484 aa).

M1 bears the N-acetylmethionine mark. H84 serves as a coordination point for Zn(2+). H159 lines the substrate pocket. Low complexity predominate over residues 188 to 206 (PVESKSTTTTTTTESPKTS). Positions 188–213 (PVESKSTTTTTTTESPKTSDPQDVNS) are disordered. Residue D266 participates in Zn(2+) binding. E301 is a substrate binding site. Zn(2+) contacts are provided by E302 and D354. Substrate is bound by residues D354, H357, K382, and Y389. A Zn(2+)-binding site is contributed by H448.

This sequence belongs to the peptidase M18 family. In terms of assembly, tetrahedron-shaped homododecamer built from six homodimers. Requires Zn(2+) as cofactor.

The protein resides in the cytoplasm. The catalysed reaction is Release of an N-terminal aspartate or glutamate from a peptide, with a preference for aspartate.. Functionally, likely to play an important role in intracellular protein and peptide metabolism. This is Aspartyl aminopeptidase (dnpep) from Dictyostelium discoideum (Social amoeba).